The primary structure comprises 104 residues: Ig kappa chain b5 variant C region (104 aa).

The Ig-like domain occupies 5–100 (PTVLIFPPSP…SGSPVVQSFS (96 aa)). Residues C26 and C85 are joined by a disulfide bond.

In Oryctolagus cuniculus (Rabbit), this protein is Ig kappa chain b5 variant C region.